The sequence spans 518 residues: MVGAGEGDRVGGGAAVGGGQQFVDRSKVRILLCDSDPSSSREVLRLLCNCSYQVTCAKSPRQVINVLNCEAGEIDIILAEVDLPVSKCFKMLKYIARNKELRHIPIIMMSNRDEVSVVVKCLRLGAAEYLVKPLRMNELLNLWTHVWRRRRMLGLSEKNFFNDNFELALSEPSDANTNSTTLLSDDTDDKPKENINQETSTSNQHEYESNPSDAEPKQKGTPEGLLVSTEGGDQASSPGVMFSRPIKTNLRVAESSAFLAYVKSSTPTTSSFDSELQKGGNRLDSSDHRGNFSSTTDRSDTGTDVNIRDKEAFEMPVQYPVVCFSSSNLHLERSNEGQNDASGTPPVYHFPFYYPGMMDHGMTHPPVQNFQGNINNAQVHTPQTLLPQYNVYPQCHGVSMMPPFQYNPAGMSIQSNQLPTQNMWPQASSTPMPEETCSRSERRAAALAKFRLKRKERCFDKKVRYVNRKKLAETRPRVRGQFVRQANYTDITSTGDDISEDEDDDPSSREVEMVSSPE.

One can recognise a Response regulatory domain in the interval 29–147 (RILLCDSDPS…ELLNLWTHVW (119 aa)). Disordered stretches follow at residues 172–241 (PSDA…PGVM), 266–305 (TPTTSSFDSELQKGGNRLDSSDHRGNFSSTTDRSDTGTDV), and 483–518 (VRQANYTDITSTGDDISEDEDDDPSSREVEMVSSPE). Positions 196 to 212 (NQETSTSNQHEYESNPS) are enriched in polar residues. One can recognise a CCT domain in the interval 443 to 485 (RAAALAKFRLKRKERCFDKKVRYVNRKKLAETRPRVRGQFVRQ).

This sequence belongs to the ARR-like family. In terms of assembly, interacts with PIL13. Interacts with PIL15.

Its subcellular location is the nucleus. In terms of biological role, controls photoperiodic flowering response. Seems to be one of the component of the circadian clock. Expression of several members of the ARR-like family is controlled by circadian rhythm. The particular coordinated sequential expression of PRR73, PRR37, PRR95, PRR59 and PPR1 result to circadian waves that may be at the basis of the endogenous circadian clock. This Oryza sativa subsp. japonica (Rice) protein is Two-component response regulator-like PRR1 (PRR1).